We begin with the raw amino-acid sequence, 600 residues long: CBP80/20-dependent translation initiation factor (600 aa).

Met-1 bears the N-acetylmethionine mark. Residues 1–18 (MENSSAASASSEAGSSRS) show a composition bias toward low complexity. Disordered stretches follow at residues 1 to 20 (MENS…RSQE), 43 to 62 (DKTE…SQWT), 134 to 154 (KQPL…EDGD), and 175 to 370 (PHEA…SSPQ). The segment at 1–305 (MENSSAASAS…PPCSPDTLTP (305 aa)) is interaction with NCBP1/CBP80. Ser-18 carries the phosphoserine modification. Over residues 52–62 (QRTQSHISQWT) the composition is skewed to polar residues. The span at 139 to 152 (HIDREGCGKGKLED) shows a compositional bias: basic and acidic residues. A compositionally biased stretch (basic residues) spans 183–198 (TKKLFRRRRNDRRRQQ). The segment covering 258-272 (PPGDKGEAGSHRNAK) has biased composition (basic and acidic residues). Phosphothreonine is present on Thr-289. Ser-299 carries the post-translational modification Phosphoserine. A compositionally biased stretch (basic and acidic residues) spans 321–339 (AEIKHKDTVLPERLRERPK). An MIF4G domain is found at 378–579 (MEILNIMRNN…LEVIELHANS (202 aa)).

This sequence belongs to the CTIF family. Interacts with NCBP1/CBP80; the interaction is direct. Associates with the eukaryotic translation initiation factor 3 (eIF-3) complex. As to expression, widely expressed.

The protein resides in the cytoplasm. It localises to the perinuclear region. Specifically required for the pioneer round of mRNA translation mediated by the cap-binding complex (CBC), that takes place during or right after mRNA export via the nuclear pore complex (NPC). Acts via its interaction with the NCBP1/CBP80 component of the CBC complex and recruits the 40S small subunit of the ribosome via eIF3. In contrast, it is not involved in steady state translation, that takes place when the CBC complex is replaced by cytoplasmic cap-binding protein eIF4E. Also required for nonsense-mediated mRNA decay (NMD), the pioneer round of mRNA translation mediated by the cap-binding complex playing a central role in nonsense-mediated mRNA decay (NMD). This Mus musculus (Mouse) protein is CBP80/20-dependent translation initiation factor (Ctif).